A 289-amino-acid polypeptide reads, in one-letter code: Putative 2-aminoethylphosphonate transport system permease protein PhnU (289 aa).

Transmembrane regions (helical) follow at residues 19-39, 76-96, 111-131, 150-170, 202-222, and 254-274; these read WLLL…SLIV, FFAT…LVFI, FIAL…GSAG, FLYS…PLVM, VIFP…LLLT, and YTVA…LFSL. In terms of domain architecture, ABC transmembrane type-1 spans 68-275; the sequence is LLNTLQIAFF…VLSLGLFSLY (208 aa).

It belongs to the binding-protein-dependent transport system permease family.

The protein resides in the cell inner membrane. Its function is as follows. Probably part of the PhnSTUV complex (TC 3.A.1.11.5) involved in 2-aminoethylphosphonate import. Probably responsible for the translocation of the substrate across the membrane. The protein is Putative 2-aminoethylphosphonate transport system permease protein PhnU (phnU) of Salmonella typhi.